A 729-amino-acid polypeptide reads, in one-letter code: Catalase-peroxidase 1 (729 aa).

Residues 98 to 226 constitute a cross-link (tryptophyl-tyrosyl-methioninium (Trp-Tyr) (with M-252)); sequence WHSAGSYRIA…LAAVMMGLIY (129 aa). His99 serves as the catalytic Proton acceptor. A cross-link (tryptophyl-tyrosyl-methioninium (Tyr-Met) (with W-98)) is located at residues 226–252; sequence YVNPEGVDGNPDPLRTAKDIRETFARM. Heme b is bound at residue His267.

It belongs to the peroxidase family. Peroxidase/catalase subfamily. Homodimer or homotetramer. Heme b serves as cofactor. Formation of the three residue Trp-Tyr-Met cross-link is important for the catalase, but not the peroxidase activity of the enzyme.

It catalyses the reaction H2O2 + AH2 = A + 2 H2O. It carries out the reaction 2 H2O2 = O2 + 2 H2O. In terms of biological role, bifunctional enzyme with both catalase and broad-spectrum peroxidase activity. The polypeptide is Catalase-peroxidase 1 (Cellvibrio japonicus (strain Ueda107) (Pseudomonas fluorescens subsp. cellulosa)).